Consider the following 648-residue polypeptide: Macrolide export ATP-binding/permease protein MacB (648 aa).

The ABC transporter domain occupies 5–243 (LELKDIRRSY…AGGTEPVVNT (239 aa)). Residue 41 to 48 (GASGSGKS) participates in ATP binding. 4 helical membrane passes run 273–293 (LLTM…VVVG), 523–543 (LFLT…VMNI), 576–596 (AVLV…LIAF), and 600–620 (LFLP…AFLC).

This sequence belongs to the ABC transporter superfamily. Macrolide exporter (TC 3.A.1.122) family. As to quaternary structure, homodimer. Part of the tripartite efflux system MacAB-TolC, which is composed of an inner membrane transporter, MacB, a periplasmic membrane fusion protein, MacA, and an outer membrane component, TolC. The complex forms a large protein conduit and can translocate molecules across both the inner and outer membranes. Interacts with MacA.

Its subcellular location is the cell inner membrane. Functionally, part of the tripartite efflux system MacAB-TolC. MacB is a non-canonical ABC transporter that contains transmembrane domains (TMD), which form a pore in the inner membrane, and an ATP-binding domain (NBD), which is responsible for energy generation. Confers resistance against macrolides. The polypeptide is Macrolide export ATP-binding/permease protein MacB (Shigella flexneri).